A 312-amino-acid chain; its full sequence is Methionyl-tRNA formyltransferase (312 aa).

110-113 (SLLP) is a binding site for (6S)-5,6,7,8-tetrahydrofolate.

The protein belongs to the Fmt family.

It carries out the reaction L-methionyl-tRNA(fMet) + (6R)-10-formyltetrahydrofolate = N-formyl-L-methionyl-tRNA(fMet) + (6S)-5,6,7,8-tetrahydrofolate + H(+). In terms of biological role, attaches a formyl group to the free amino group of methionyl-tRNA(fMet). The formyl group appears to play a dual role in the initiator identity of N-formylmethionyl-tRNA by promoting its recognition by IF2 and preventing the misappropriation of this tRNA by the elongation apparatus. This Mycobacterium marinum (strain ATCC BAA-535 / M) protein is Methionyl-tRNA formyltransferase.